The following is a 724-amino-acid chain: NAD(+) hydrolase SARM1 (724 aa).

A mitochondrion-targeting transit peptide spans 1 to 27; sequence MVLTLLFSAYKLCRFFTMSGPRPGADR. Residues 24–56 are disordered; the sequence is GADRLTVPGPDRSGGASPWWAAGGRGSREVSPG. The segment covering 36-45 has biased composition (low complexity); it reads SGGASPWWAA. An ARM 1 repeat occupies 60 to 100; the sequence is EVQGALERSLPELQQALSELKQASAARAVGAGLAEVFQLVE. Residues Trp103, Arg110, 149 to 157, and 190 to 193 contribute to the NAD(+) site; these read EQILVAENR and HMFK. 7 ARM repeats span residues 114-153, 155-193, 196-235, 237-280, 281-314, 315-354, and 359-402; these read QGLC…QILV, ENRD…HMFK, EETC…NCAL, GGQT…LATN, KEVE…CLVD, ASDT…AEAA, and QGKT…EEVP. SAM domains lie at 412–476 and 486–548; these read WKEA…LKTF and NLAD…MLHS. Residues Ser548 and Ser558 each carry the phosphoserine modification. Residues 560 to 703 form the TIR domain; sequence DTPDVFISYR…KIIRFLQGRP (144 aa). Residues 569 to 570 and Glu599 each bind NAD(+); that span reads RR. The active site involves Glu642. Positions 703–716 are enriched in polar residues; it reads PSQDSSAGSDTSLE. The tract at residues 703–724 is disordered; sequence PSQDSSAGSDTSLEGATPMGLP.

It belongs to the SARM1 family. In terms of assembly, homooctamer; forms an octameric ring via SAM domains. Interacts with TICAM1/TRIF and thereby interferes with TICAM1/TRIF function. Interacts with SDC2 (via cytoplasmic domain) and MAPK10/JNK3. Phosphorylation at Ser-548 by JNK kinases (MAPK8, MAPK9 and /or MAPK10) enhance the NAD(+) hydrolase (NADase) activity. Phosphorylation at Ser-548 and subsequent activation takes place in response to oxidative stress conditions and inhibits mitochondrial respiration. In terms of tissue distribution, widely expressed in the brain and neurons (at protein level). Expressed in photoreceptor cells of the neural retina.

It is found in the cytoplasm. The protein resides in the cell projection. The protein localises to the axon. Its subcellular location is the dendrite. It localises to the synapse. It is found in the mitochondrion. It carries out the reaction NAD(+) + H2O = ADP-D-ribose + nicotinamide + H(+). The enzyme catalyses NAD(+) = cyclic ADP-beta-D-ribose + nicotinamide + H(+). It catalyses the reaction NADP(+) + H2O = ADP-D-ribose 2'-phosphate + nicotinamide + H(+). With respect to regulation, autoinhibited: in the inactive state, the enzymatic TIR domain is held apart by the autoinhibiting ARM repeats. NAD(+)-binding to ARM repeats maintains an inactive state by promoting interaction between ARM repeats and the TIR domain, thereby facilitating inhibition of the enzymatic TIR domain. Following activation, possibly by nicotinamide mononucleotide (NMN), auto-inhibitory interactions are released, allowing self-association of the TIR domains and subsequent activation of the NAD(+) hydrolase (NADase) activity. Self-association of TIR domains is facilitated by the octamer of SAM domains. NAD(+) hydrolase, which plays a key role in axonal degeneration following injury by regulating NAD(+) metabolism. Acts as a negative regulator of MYD88- and TRIF-dependent toll-like receptor signaling pathway by promoting Wallerian degeneration, an injury-induced form of programmed subcellular death which involves degeneration of an axon distal to the injury site. Wallerian degeneration is triggered by NAD(+) depletion: in response to injury, SARM1 is activated and catalyzes cleavage of NAD(+) into ADP-D-ribose (ADPR), cyclic ADPR (cADPR) and nicotinamide; NAD(+) cleavage promoting cytoskeletal degradation and axon destruction. Also able to hydrolyze NADP(+), but not other NAD(+)-related molecules. Can activate neuronal cell death in response to stress. Regulates dendritic arborization through the MAPK4-JNK pathway. Involved in innate immune response: inhibits both TICAM1/TRIF- and MYD88-dependent activation of JUN/AP-1, TRIF-dependent activation of NF-kappa-B and IRF3, and the phosphorylation of MAPK14/p38. The sequence is that of NAD(+) hydrolase SARM1 from Mus musculus (Mouse).